Consider the following 600-residue polypeptide: MEAIKTFSPKFGFQISLSPRTHLTPVRFPPTACPVKPANLVRLKATRALIRDPQESNRKFQKFPPSEWTNRFDSVSVDASEMDALRKEIDKIIPNVKKELMSSQGIESTKKKILMVYLLVSLGLAYHFEDEIEECLKEGFETIEEMMAGEDNLYTISIIFLVLRTYGHHMSSDIFQKFKGNDGNFKGCISGDAKGLLALYEAAQLRTTTEYIMEEALSFTSSNLELLAADGRCPPHLSKHIRNALGLSQHKQMEVLVAVEYISFYEQEKDHDKILLKFAKLNFKLMQLHYLEELKVVTKWYKEHDFASNLPPYFKYVIVENHFFAITMYFEPKFSQKRIMLAKYFTVLVLLDDTCDRYASLSEAESLTNSLERWAPDDAMDKQPHYLKFVFKFIMGCFEEFERELASEGRSYSVKATLEEFKTIVKANFDFAKLAHTGHVPSFKEYMEVGEVEVGVCATLAGNLMCIGHIGDEGVYEWLKSRPKFLKAASTYGRLMNDIAGFEDDMKREYVITGVNTYMKQYGLTKMEAIRELQNLVEYNHTIMNEEFLKTTDLPRQIRKQVINVARSLNVSYTEGEGFTHTKGKVDEYITSLFITPIRI.

Mg(2+)-binding residues include Asp352, Asp356, Asn497, and Asp505. The DDXXD motif signature appears at 352–356 (DDTCD).

The protein belongs to the terpene synthase family. Tpsa subfamily. Mg(2+) is required as a cofactor. Requires Mn(2+) as cofactor. As to expression, stele, and tips of primary and secondary root.

It localises to the plastid. It catalyses the reaction (2E,6E,10E)-geranylgeranyl diphosphate = rhizathalene A + diphosphate. It participates in secondary metabolite biosynthesis; terpenoid biosynthesis. Catalyzes the synthesis of the semivolatile diterpene rhizatalene A. The polypeptide is Terpenoid synthase 8 (TPS08) (Arabidopsis thaliana (Mouse-ear cress)).